The sequence spans 298 residues: MGKEVMVSDYGDDDGEDAGGGDEYRIPEWEIGLPNGDDLTPLSQYLVPSILALAFSMIPERSRTIHDVNRASQITLSSLRSSTNASSVMEEVVDRVESSVPGSDPKKQKKSDGGEAAAVEDSTAEEGDSGPEDASGKTSKRPRLVWTPQLHKRFVDVVAHLGIKNAVPKTIMQLMNVEGLTRENVASHLQKYRLYLKRIQGLTTEEDPYSSSDQLFSSTPVPPQSFQDGGGSNGKLGVPVPVPSMVPIPGYGNQMGMQGYYQQYSNHGNESNQYMMQQNKFGTMVTYPSVGGGDVNDK.

3 disordered regions span residues 1–26 (MGKE…EYRI), 79–143 (LRSS…KRPR), and 206–232 (EDPY…GGGS). A compositionally biased stretch (acidic residues) spans 10–20 (YGDDDGEDAGG). Over residues 104–113 (DPKKQKKSDG) the composition is skewed to basic and acidic residues. Over residues 122 to 131 (STAEEGDSGP) the composition is skewed to acidic residues. A DNA-binding region (myb-like GARP) is located at residues 138-197 (TSKRPRLVWTPQLHKRFVDVVAHLGIKNAVPKTIMQLMNVEGLTRENVASHLQKYRLYLK). Polar residues predominate over residues 209 to 227 (YSSSDQLFSSTPVPPQSFQ).

Its subcellular location is the nucleus. Functionally, transcription factor that is a critical component of the regulatory circuit of the circadian clock. Binds to specific sites on CCA1 promoter leading to CCA1 activation. Is required for the rhythmic expression of other clock genes such as LHY, GI and APRR1/TOC1. The protein is Transcription factor BOA (BOA) of Arabidopsis thaliana (Mouse-ear cress).